The following is a 495-amino-acid chain: Glycerol kinase (495 aa).

An ADP-binding site is contributed by Thr-12. Residues Thr-12, Thr-13, and Ser-14 each contribute to the ATP site. Residue Thr-12 coordinates sn-glycerol 3-phosphate. Position 16 (Arg-16) interacts with ADP. The sn-glycerol 3-phosphate site is built by Arg-82, Glu-83, Tyr-134, and Asp-243. Arg-82, Glu-83, Tyr-134, Asp-243, and Gln-244 together coordinate glycerol. 2 residues coordinate ADP: Thr-265 and Gly-308. ATP-binding residues include Thr-265, Gly-308, Gln-312, and Gly-409. Gly-409 and Asn-413 together coordinate ADP.

This sequence belongs to the FGGY kinase family.

It carries out the reaction glycerol + ATP = sn-glycerol 3-phosphate + ADP + H(+). It functions in the pathway polyol metabolism; glycerol degradation via glycerol kinase pathway; sn-glycerol 3-phosphate from glycerol: step 1/1. Inhibited by fructose 1,6-bisphosphate (FBP). Functionally, key enzyme in the regulation of glycerol uptake and metabolism. Catalyzes the phosphorylation of glycerol to yield sn-glycerol 3-phosphate. This is Glycerol kinase from Ectopseudomonas mendocina (strain ymp) (Pseudomonas mendocina).